The chain runs to 310 residues: Aspartate carbamoyltransferase catalytic subunit (310 aa).

R57 and T58 together coordinate carbamoyl phosphate. Residue K86 participates in L-aspartate binding. Residues R107, H135, and Q138 each coordinate carbamoyl phosphate. L-aspartate is bound by residues R168 and R229. Carbamoyl phosphate contacts are provided by L268 and P269.

Belongs to the aspartate/ornithine carbamoyltransferase superfamily. ATCase family. As to quaternary structure, heterooligomer of catalytic and regulatory chains.

It catalyses the reaction carbamoyl phosphate + L-aspartate = N-carbamoyl-L-aspartate + phosphate + H(+). The protein operates within pyrimidine metabolism; UMP biosynthesis via de novo pathway; (S)-dihydroorotate from bicarbonate: step 2/3. Functionally, catalyzes the condensation of carbamoyl phosphate and aspartate to form carbamoyl aspartate and inorganic phosphate, the committed step in the de novo pyrimidine nucleotide biosynthesis pathway. This is Aspartate carbamoyltransferase catalytic subunit from Thermococcus kodakarensis (strain ATCC BAA-918 / JCM 12380 / KOD1) (Pyrococcus kodakaraensis (strain KOD1)).